Here is a 132-residue protein sequence, read N- to C-terminus: Small ribosomal subunit protein uS12 (132 aa).

Residue aspartate 89 is modified to 3-methylthioaspartic acid. The disordered stretch occupies residues 101–132; it reads TLDASGAAGPSSTNKATRNRKRSKYGVKRPKA. Positions 117 to 132 are enriched in basic residues; it reads TRNRKRSKYGVKRPKA.

It belongs to the universal ribosomal protein uS12 family. Part of the 30S ribosomal subunit. Contacts proteins S8 and S17. May interact with IF1 in the 30S initiation complex.

Its function is as follows. With S4 and S5 plays an important role in translational accuracy. In terms of biological role, interacts with and stabilizes bases of the 16S rRNA that are involved in tRNA selection in the A site and with the mRNA backbone. Located at the interface of the 30S and 50S subunits, it traverses the body of the 30S subunit contacting proteins on the other side and probably holding the rRNA structure together. The combined cluster of proteins S8, S12 and S17 appears to hold together the shoulder and platform of the 30S subunit. This is Small ribosomal subunit protein uS12 from Sorangium cellulosum (strain So ce56) (Polyangium cellulosum (strain So ce56)).